Here is a 360-residue protein sequence, read N- to C-terminus: DNA replication and repair protein RecF (360 aa).

An ATP-binding site is contributed by 30 to 37; sequence GNNGSGKT.

This sequence belongs to the RecF family.

The protein localises to the cytoplasm. Its function is as follows. The RecF protein is involved in DNA metabolism; it is required for DNA replication and normal SOS inducibility. RecF binds preferentially to single-stranded, linear DNA. It also seems to bind ATP. The chain is DNA replication and repair protein RecF from Mannheimia succiniciproducens (strain KCTC 0769BP / MBEL55E).